The following is a 622-amino-acid chain: Vacuolar protein sorting-associated protein 27 (622 aa).

The 132-residue stretch at 18–149 folds into the VHS domain; it reads SESIPNGDLD…KLISRGIKFP (132 aa). Position 157 is a phosphoserine (Ser-157). The segment at 170–230 adopts an FYVE-type; atypical zinc-finger fold; the sequence is WIDSDACMIC…VCDSCFEDYD (61 aa). Cys-176, Cys-179, Cys-192, Cys-195, Cys-200, His-203, Cys-222, and Cys-225 together coordinate Zn(2+). Residues 236 to 260 are disordered; that stretch reads DSKKSKKHRHKRKKDRDYSTPEDEE. The segment covering 239–249 has biased composition (basic residues); it reads KSKKHRHKRKK. The region spanning 258–277 is the UIM 1 domain; sequence DEEELIRKAIELSLKESRNS. Lys-294 participates in a covalent cross-link: Glycyl lysine isopeptide (Lys-Gly) (interchain with G-Cter in ubiquitin). One can recognise a UIM 2 domain in the interval 301–320; the sequence is EEDPDLKAAIQESLREAEEA. The segment covering 317 to 328 has biased composition (basic and acidic residues); sequence AEEAKLRSERQK. Disordered stretches follow at residues 317–348 and 462–622; these read AEEA…IHSV and AESY…LIEL. Polar residues predominate over residues 462 to 500; the sequence is AESYQTPPLQQLSSHQYKPQQDVSRQQSVKANSSPTTNI. A Phosphoserine modification is found at Ser-495. Residues 533-548 are compositionally biased toward acidic residues; that stretch reads EAEDEGTQAVQDEESS. Ser-613 carries the phosphoserine modification.

It belongs to the VPS27 family. As to quaternary structure, component of the ESCRT-0 complex composed of HSE1 and VPS27. Interacts with ENT3 and ENT5, the ESCRT-I subunits VPS23 and VPS28 and with the COPIb subunits SEC27, SEC28 and SEC33. May form a complex composed of VPS27, HSE1 and DOA1. Interacts with DOA1. Interacts with ubiquitin.

The protein localises to the endosome membrane. In terms of biological role, component of the ESCRT-0 complex which is the sorting receptor for ubiquitinated cargo proteins at the multivesicular body (MVB) and recruits ESCRT-I to the MVB outer membrane. Controls exit from the prevacuolar compartment (PVC) in both the forward direction to the vacuole and the return to the Golgi. Allows VPS10 to return to the (trans-Golgi network) TGN from the PVC. Might also function as an alternate adapter in the COPIb clathrin-like coat. The sequence is that of Vacuolar protein sorting-associated protein 27 (VPS27) from Saccharomyces cerevisiae (strain ATCC 204508 / S288c) (Baker's yeast).